We begin with the raw amino-acid sequence, 86 residues long: Colicin-E2 immunity protein (86 aa).

Belongs to the colicins ColE2/ColE8/ColE9 and pyocins S1/S2 family.

Functionally, this protein is able to protect a cell, which harbors the plasmid ColE2 encoding colicin E2, against colicin E2. The chain is Colicin-E2 immunity protein (imm) from Escherichia coli.